The following is a 493-amino-acid chain: 1-aminocyclopropane-1-carboxylate synthase CMW33 (493 aa).

Position 279 is an N6-(pyridoxal phosphate)lysine (K279).

The protein belongs to the class-I pyridoxal-phosphate-dependent aminotransferase family. Homodimer. It depends on pyridoxal 5'-phosphate as a cofactor.

The catalysed reaction is S-adenosyl-L-methionine = 1-aminocyclopropane-1-carboxylate + S-methyl-5'-thioadenosine + H(+). It participates in alkene biosynthesis; ethylene biosynthesis via S-adenosyl-L-methionine; ethylene from S-adenosyl-L-methionine: step 1/2. Functionally, catalyzes the formation of 1-aminocyclopropane-1-carboxylate, a direct precursor of ethylene in higher plants. The polypeptide is 1-aminocyclopropane-1-carboxylate synthase CMW33 (ACS1) (Cucurbita maxima (Pumpkin)).